The chain runs to 203 residues: Glutathione S-transferase (203 aa).

In terms of domain architecture, GST N-terminal spans 2 to 79 (PDYKVYYFNV…YLANQVGLAG (78 aa)). Glutathione contacts are provided by residues Y8, W39, K43, 49–51 (GQM), and 63–64 (QS). The GST C-terminal domain maps to 81 to 203 (DDWENLMIDT…YIAKRPITEV (123 aa)).

This sequence belongs to the GST superfamily. Sigma family. As to quaternary structure, homodimer.

The enzyme catalyses RX + glutathione = an S-substituted glutathione + a halide anion + H(+). Its function is as follows. Conjugation of reduced glutathione to a wide number of exogenous and endogenous hydrophobic electrophiles. This Anopheles gambiae (African malaria mosquito) protein is Glutathione S-transferase (GstS1).